The primary structure comprises 95 residues: uncharacterized protein (95 aa).

The chain crosses the membrane as a helical span at residues 45 to 65; it reads WLSGLAFVLQAALVMPVVLAF.

It is found in the membrane. This is an uncharacterized protein from Mycobacterium leprae (strain TN).